We begin with the raw amino-acid sequence, 172 residues long: Putative defense protein (172 aa).

The first 21 residues, 1–21, serve as a signal peptide directing secretion; sequence MKLVVAAVLAMAASRWRRLSA. Residues 22–172 enclose the Reelin domain; sequence HGQVPSSTCA…LRQLDNAVAA (151 aa).

Belongs to the insect defense protein family. As to expression, in adults, in hemolymph.

It is found in the secreted. Its function is as follows. May have antimicrobial activity. The polypeptide is Putative defense protein (Locusta migratoria (Migratory locust)).